The primary structure comprises 388 residues: Putative F-box protein At3g49520 (388 aa).

An F-box domain is found at 1–47; it reads MTTISDLPYDLVKEIFSWVPFTSLRAVRSTCKTWNALSKNQIFGKKS.

The chain is Putative F-box protein At3g49520 from Arabidopsis thaliana (Mouse-ear cress).